A 360-amino-acid chain; its full sequence is Spore germination protein GerQB (360 aa).

The next 10 helical transmembrane spans lie at 11–31 (SPYM…MLGF), 45–65 (ISTL…YQIL), 84–104 (IGGL…ATTL), 116–136 (FPSI…YYIV), 142–162 (VVAG…FTFF), 188–208 (MKGN…YPFI), 220–240 (YANL…LAFF), 270–290 (IIVS…LWGV), 300–320 (IKQK…SFFL), and 331–351 (TWTG…LWLI).

Belongs to the amino acid-polyamine-organocation (APC) superfamily. Spore germination protein (SGP) (TC 2.A.3.9) family.

Its subcellular location is the membrane. Its function is as follows. Required for the germination response to inosine. Has no role in L-alanine germination. In Bacillus cereus, this protein is Spore germination protein GerQB (gerQB).